Here is a 714-residue protein sequence, read N- to C-terminus: G protein-coupled receptor kinase 2 (714 aa).

The segment at 1–308 (MELENIVANT…LEAQPITYKT (308 aa)) is N-terminal. 2 RGS domains span residues 53 to 174 (YGYV…SQHS) and 177 to 294 (INHK…HRYL). Positions 141–229 (SNANPTETAE…GGGEGGGGGK (89 aa)) are disordered. The segment covering 154 to 175 (CNNTTANNCNNINNSNNSQHSS) has biased composition (low complexity). Basic and acidic residues-rich tracts occupy residues 176-190 (DINHKKLDTRNHNGD) and 199-220 (HQDDGDESVKCQEGHDDAEKGG). The 266-residue stretch at 309-574 (FRMYRVLGKG…GQDVMAHPFF (266 aa)) folds into the Protein kinase domain. ATP-binding positions include 315–323 (LGKGGFGEV) and Lys338. The Proton acceptor role is filled by Asp435. Residues 577-642 (TQLNWRRLEA…GSVSISWQNE (66 aa)) form the AGC-kinase C-terminal domain. Residue Ser612 is modified to Phosphoserine. Thr613 bears the Phosphothreonine mark. The interval 667-714 (INAAPEPDKAGCFPFRRKKKQPARTQPIPIPEHLLTTSHSVSSTTVES) is disordered. The span at 698–714 (EHLLTTSHSVSSTTVES) shows a compositional bias: low complexity.

Belongs to the protein kinase superfamily. AGC Ser/Thr protein kinase family. GPRK subfamily. In terms of tissue distribution, expressed in all larval tissues and in adult ovaries. Larval CNS staining is localized to axons projecting to the optic lobes and the mushroom bodies, in the longitudinal connectives, and in cell bodies and nerves of the ring gland corpus allatum. Adult CNS staining is detectable only in cell bodies and processes associated with the ellipsoid body of the central complex and portions of the mushroom bodies. In the wing disk, expression is confined to a stripe that parallels the anterior/posterior boundary of the wing blade and the hinge region, and weak expression in the prospective notum.

Its subcellular location is the membrane. It catalyses the reaction [G-protein-coupled receptor] + ATP = [G-protein-coupled receptor]-phosphate + ADP + H(+). In terms of biological role, specifically phosphorylates the activated forms of G protein-coupled receptors. Required during oogenesis and embryogenesis; component of a signaling pathway that functions during egg chamber maturation. The chain is G protein-coupled receptor kinase 2 (Gprk2) from Drosophila melanogaster (Fruit fly).